The sequence spans 403 residues: Flagellar hook protein FlgE (403 aa).

It belongs to the flagella basal body rod proteins family.

The protein localises to the bacterial flagellum basal body. This chain is Flagellar hook protein FlgE (flgE), found in Salmonella typhi.